Here is a 138-residue protein sequence, read N- to C-terminus: Cysteine desulfuration protein SufE (138 aa).

The Cysteine persulfide intermediate role is filled by cysteine 51.

It belongs to the SufE family. In terms of assembly, homodimer. Interacts with SufS.

It is found in the cytoplasm. It participates in cofactor biosynthesis; iron-sulfur cluster biosynthesis. In terms of biological role, participates in cysteine desulfuration mediated by SufS. Cysteine desulfuration mobilizes sulfur from L-cysteine to yield L-alanine and constitutes an essential step in sulfur metabolism for biosynthesis of a variety of sulfur-containing biomolecules. Functions as a sulfur acceptor for SufS, by mediating the direct transfer of the sulfur atom from the S-sulfanylcysteine of SufS, an intermediate product of cysteine desulfuration process. This Shigella flexneri serotype 5b (strain 8401) protein is Cysteine desulfuration protein SufE.